The following is a 461-amino-acid chain: Photosystem II CP43 reaction center protein (461 aa).

The propeptide occupies 1 to 2 (ME). The residue at position 3 (threonine 3) is an N-acetylthreonine. A Phosphothreonine modification is found at threonine 3. 5 helical membrane-spanning segments follow: residues 57-81 (LFEV…PHLA), 122-143 (LIGP…KDKN), 166-188 (KAMY…RIIT), 243-263 (TPWP…LSYS), and 279-300 (WFNN…ASQS). Residue glutamate 355 participates in [CaMn4O5] cluster binding. The chain crosses the membrane as a helical span at residues 435-459 (RARAAAAGFEKGIDRLDEPVLSMRP).

Belongs to the PsbB/PsbC family. PsbC subfamily. As to quaternary structure, PSII is composed of 1 copy each of membrane proteins PsbA, PsbB, PsbC, PsbD, PsbE, PsbF, PsbH, PsbI, PsbJ, PsbK, PsbL, PsbM, PsbT, PsbX, PsbY, PsbZ, Psb30/Ycf12, at least 3 peripheral proteins of the oxygen-evolving complex and a large number of cofactors. It forms dimeric complexes. Requires Binds multiple chlorophylls and provides some of the ligands for the Ca-4Mn-5O cluster of the oxygen-evolving complex. It may also provide a ligand for a Cl- that is required for oxygen evolution. PSII binds additional chlorophylls, carotenoids and specific lipids. as cofactor.

It localises to the plastid. The protein resides in the chloroplast thylakoid membrane. Functionally, one of the components of the core complex of photosystem II (PSII). It binds chlorophyll and helps catalyze the primary light-induced photochemical processes of PSII. PSII is a light-driven water:plastoquinone oxidoreductase, using light energy to abstract electrons from H(2)O, generating O(2) and a proton gradient subsequently used for ATP formation. This chain is Photosystem II CP43 reaction center protein, found in Tetradesmus obliquus (Green alga).